The chain runs to 308 residues: Zinc-binding protein TroA (308 aa).

The signal sequence occupies residues 1 to 22 (MIRERICACVLALGMLTGFTHA). H68, H133, H199, and D279 together coordinate Zn(2+).

The protein belongs to the bacterial solute-binding protein 9 family. As to quaternary structure, monomer.

It localises to the periplasm. Functionally, part of the ATP-binding cassette (ABC) transport system TroABC involved in zinc import. Binds zinc with high affinity and specificity and delivers it to the membrane permease for translocation into the cytoplasm. The sequence is that of Zinc-binding protein TroA (troA) from Treponema pallidum (strain Nichols).